The chain runs to 218 residues: 3-isopropylmalate dehydratase small subunit (218 aa).

It belongs to the LeuD family. LeuD type 1 subfamily. In terms of assembly, heterodimer of LeuC and LeuD.

It carries out the reaction (2R,3S)-3-isopropylmalate = (2S)-2-isopropylmalate. Its pathway is amino-acid biosynthesis; L-leucine biosynthesis; L-leucine from 3-methyl-2-oxobutanoate: step 2/4. Catalyzes the isomerization between 2-isopropylmalate and 3-isopropylmalate, via the formation of 2-isopropylmaleate. This Alkalilimnicola ehrlichii (strain ATCC BAA-1101 / DSM 17681 / MLHE-1) protein is 3-isopropylmalate dehydratase small subunit.